A 562-amino-acid chain; its full sequence is Vacuolar basic amino acid transporter 1 (562 aa).

The Vacuolar portion of the chain corresponds to 1–30 (MQTLDETSNLLPPPEEAEAPPLEQKFHEYN). The chain crosses the membrane as a helical span at residues 31–51 (LALPKFPILFSLWLGSFLSSL). Residues 52 to 100 (DSTIVANIMNRVAEEFSESSKKQWIATSFLLTNTAFQPLYGKLSDITGR) are Cytoplasmic-facing. Residues 101-121 (KSALLTAQFFFGLGCLLTCFA) traverse the membrane as a helical segment. Residues 122-131 (RNVTEFSIAR) lie on the Vacuolar side of the membrane. Asn-123 carries N-linked (GlcNAc...) asparagine glycosylation. A helical transmembrane segment spans residues 132–152 (AICGIGAGGLNAISSIAVSDI). Residues 153-166 (CTARERGVYQGYAN) are Cytoplasmic-facing. Residues 167-187 (IVFGFGQLLGAPLGGVFIETI) traverse the membrane as a helical segment. Residues 188–190 (GWR) lie on the Vacuolar side of the membrane. A helical membrane pass occupies residues 191-211 (ALFGIQVPVIMLCSVLAIKNI). At 212 to 232 (NIKLFHVPPMKERYTLKNLSR) the chain is on the cytoplasmic side. The chain crosses the membrane as a helical span at residues 233–253 (IDIFGSLSLVATISGVLFLCS). The Vacuolar segment spans residues 254 to 255 (SQ). A helical transmembrane segment spans residues 256–276 (LNKLYLALFTIGSFIVFILVE). Topologically, residues 277-292 (RYYATEKILPFELLTR) are cytoplasmic. Residues 293 to 313 (SFCLSSAVTVISSFVVFGEIF) traverse the membrane as a helical segment. The Vacuolar portion of the chain corresponds to 314–331 (RSPIYLQLLQNISVTKTG). Asn-324 carries an N-linked (GlcNAc...) asparagine glycan. Residues 332 to 352 (LFLIFPSISVAVGSLVTGWVL) form a helical membrane-spanning segment. Residues 353 to 365 (RNTKINLAHCAYQ) are Cytoplasmic-facing. A helical transmembrane segment spans residues 366–386 (IIFGGMIMQLLGLGLGYFLLS). The Vacuolar portion of the chain corresponds to 387-419 (HLNPDYTIYDMLESITFRSNSIWWKLIYVFASV). The helical transmembrane segment at 420 to 440 (LVSFGYACLLVATLVSIVFTV) threads the bilayer. The Cytoplasmic segment spans residues 441 to 448 (EKSQQGTM). The chain crosses the membrane as a helical span at residues 449 to 469 (TGVFYLWRSIGNVLGASLTLV). Residues 470 to 528 (SYENSLSSMLWNYMFKTKRDDEYHFTKKQYYSLINDSSYLRGPNFPTDIFVRILDVYKK) lie on the Vacuolar side of the membrane. N-linked (GlcNAc...) asparagine glycosylation occurs at Asn-504. The chain crosses the membrane as a helical span at residues 529–549 (AFLISYIPNIALAAVGIVLSL). Over 550–562 (YLVKHTYKRSSSS) the chain is Cytoplasmic.

Belongs to the major facilitator superfamily.

The protein resides in the vacuole membrane. In terms of biological role, transporter required for vacuolar uptake of at least histidine and lysine. In Saccharomyces cerevisiae (strain ATCC 204508 / S288c) (Baker's yeast), this protein is Vacuolar basic amino acid transporter 1 (VBA1).